We begin with the raw amino-acid sequence, 293 residues long: Single-pass membrane and coiled-coil domain-containing protein 2 (293 aa).

The stretch at 116–188 forms a coiled coil; the sequence is KNLLEFLLKD…SAKLRMYQME (73 aa). Residues 234–254 form a helical membrane-spanning segment; the sequence is IFIMFYVLTVTGLLCYILFFG.

The protein resides in the membrane. This Macaca fascicularis (Crab-eating macaque) protein is Single-pass membrane and coiled-coil domain-containing protein 2 (SMCO2).